Consider the following 256-residue polypeptide: MQQQQHPAPGAEFVADRDAARAEVERALGGYSFRDGGALLLEDALTHSVHPRDEAGGRARHQRLEFLGDAALGLAFATIFYRDDPGLDQGDLTVLRSANVSTQKLARVAVRRRLYPLLRRYNCAPQDHEVSRFTKSVEGPYSGDPIEGPRVLADIVEAIVGAVYLDSKLDLEVLQKVAKLLCEPIITKKALLEDPESMLNELGGEHREDLEIKILAWRKVANVVDDGREQAITTSGLGNGSEDEVGKLRTIRIEEA.

The region spanning 22–168 (AEVERALGGY…IVGAVYLDSK (147 aa)) is the RNase III domain. Mg(2+)-binding residues include E65, D154, and E157.

Mg(2+) serves as cofactor. Mn(2+) is required as a cofactor.

Its function is as follows. Cleaves double-stranded RNA (dsRNA). This chain is Ribonuclease 3-like protein 1, found in Oryza sativa subsp. japonica (Rice).